Consider the following 237-residue polypeptide: N-alpha-acetyltransferase 40 (237 aa).

Glycine 2 carries the N-myristoyl glycine lipid modification. Residues 63–216 form the N-acetyltransferase domain; sequence SGLEPATVDW…EDCSYEILSR (154 aa). Substrate contacts are provided by residues tyrosine 85, 127–129, and tyrosine 138; that span reads DVE. Acetyl-CoA contacts are provided by residues 140–142 and 148–153; these read VQL and RKGLGK. Threonine 174 provides a ligand contact to substrate. Acetyl-CoA is bound at residue asparagine 179. Residues serine 197 and tyrosine 211 each coordinate substrate.

This sequence belongs to the acetyltransferase family. NAA40 subfamily.

The protein resides in the cytoplasm. The protein localises to the nucleus. The enzyme catalyses N-terminal L-seryl-[histone H4] + acetyl-CoA = N-terminal N(alpha)-acetyl-L-seryl-[histone H4] + CoA + H(+). The catalysed reaction is N-terminal L-seryl-[histone H2A] + acetyl-CoA = N-terminal N(alpha)-acetyl-L-seryl-[histone H2A] + CoA + H(+). Functionally, N-alpha-acetyltransferase that specifically mediates the acetylation of the N-terminal residues of histones H4 and H2A. In contrast to other N-alpha-acetyltransferase, has a very specific selectivity for histones H4 and H2A N-terminus and specifically recognizes the 'Ser-Gly-Arg-Gly sequence'. Acts as a negative regulator of apoptosis. May play a role in hepatic lipid metabolism. The polypeptide is N-alpha-acetyltransferase 40 (Mus musculus (Mouse)).